A 73-amino-acid polypeptide reads, in one-letter code: Ocellatin-PT7 (73 aa).

The first 22 residues, 1 to 22 (MAFLKKSLFLVLFLGLVSLSIC), serve as a signal peptide directing secretion. A propeptide spanning residues 23-39 (DEEKRQDEDDDDDDDEE) is cleaved from the precursor.

Expressed by the skin glands.

The protein resides in the secreted. Functionally, has antibacterial activity against Gram-negative bacteria E.coli ATCC 25922 (MIC=60 uM) and S.choleraesuis ATCC 14028 (MIC=240 uM) and against Gram-positive bacterium S.aureus ATCC 29313 (MIC=240 uM). Shows no hemolytic activity and no cytotoxicity. The polypeptide is Ocellatin-PT7 (Leptodactylus pustulatus (Ceara white-lipped frog)).